The sequence spans 397 residues: Polygalacturonase (397 aa).

The first 22 residues, 1–22, serve as a signal peptide directing secretion; it reads MGSYLGIYTILVLCLLGYSANA. 4 PbH1 repeats span residues 169 to 195, 196 to 217, 219 to 239, and 249 to 270; these read GKNM…HLGR, CEGV…SVGD, MKNL…SVGS, and VTDI…RIKT. Asn171 carries N-linked (GlcNAc...) asparagine glycosylation. Asp210 acts as the Proton donor in catalysis. Cys212 and Cys229 are joined by a disulfide. His233 is a catalytic residue. Asn256 is a glycosylation site (N-linked (GlcNAc...) asparagine). Disulfide bonds link Cys341/Cys347 and Cys370/Cys386.

This sequence belongs to the glycosyl hydrolase 28 family. In terms of tissue distribution, pollen.

It localises to the secreted. The protein resides in the cell wall. It catalyses the reaction (1,4-alpha-D-galacturonosyl)n+m + H2O = (1,4-alpha-D-galacturonosyl)n + (1,4-alpha-D-galacturonosyl)m.. Functionally, may function in depolymerizing pectin during pollen development, germination, and tube growth. In Brassica napus (Rape), this protein is Polygalacturonase.